The chain runs to 53 residues: uncharacterized protein (53 aa).

2 helical membrane passes run 3-22 (LFGMIFLIATVAFILLGVLL) and 26-45 (AFFFVSILTLIAAIVLFTVL).

Its subcellular location is the cell membrane. This is an uncharacterized protein from Bacillus subtilis (strain 168).